A 143-amino-acid polypeptide reads, in one-letter code: MFFGTFTPKMDDKGRLTLPAKFRDELAEGLMVTKGQDHSLAIYPRNVFLERARKAAAASRTNPEARAFVRNLAASADEQSVDGHGRITISPDHRRYAGLSKECVVIGSVDFVEIWNAESWNQYQAEHEESYANGDDAAFMDFL.

2 SpoVT-AbrB domains span residues 5–47 (TFTP…PRNV) and 76–119 (ADEQ…NAES).

This sequence belongs to the MraZ family. In terms of assembly, forms oligomers.

The protein resides in the cytoplasm. The protein localises to the nucleoid. The polypeptide is Transcriptional regulator MraZ (Corynebacterium kroppenstedtii (strain DSM 44385 / JCM 11950 / CIP 105744 / CCUG 35717)).